Here is a 567-residue protein sequence, read N- to C-terminus: Inactive protein kinase SELMODRAFT_444075 (567 aa).

Positions 148–206 are disordered; the sequence is NETRRKGPSPSEVLNSTTSSPASHKPQVLNDFLRMKESREYTEETDTQRNVSRPVDRVS. The segment covering 159-169 has biased composition (polar residues); that stretch reads EVLNSTTSSPA. Residues 180–189 show a composition bias toward basic and acidic residues; it reads LRMKESREYT. Over residues 196–206 the composition is skewed to low complexity; sequence RNVSRPVDRVS. In terms of domain architecture, Protein kinase spans 255-487; sequence FSDVNFLAEG…EGDSLSDTSL (233 aa). Residues 261–269 and Lys283 each bind ATP; that span reads LAEGGYGSV. A compositionally biased stretch (low complexity) spans 511-538; sequence DSSSSRSSSASSVLKSFSRTQHSSRSSS. The segment at 511 to 567 is disordered; it reads DSSSSRSSSASSVLKSFSRTQHSSRSSSNAGSPLNPAATQALAFKKYNKNTTRHTQD. A compositionally biased stretch (basic residues) spans 556 to 567; sequence KYNKNTTRHTQD.

The sequence is that of Inactive protein kinase SELMODRAFT_444075 from Selaginella moellendorffii (Spikemoss).